A 172-amino-acid chain; its full sequence is Adenine phosphoribosyltransferase (172 aa).

The protein belongs to the purine/pyrimidine phosphoribosyltransferase family. Homodimer.

The protein localises to the cytoplasm. It catalyses the reaction AMP + diphosphate = 5-phospho-alpha-D-ribose 1-diphosphate + adenine. It functions in the pathway purine metabolism; AMP biosynthesis via salvage pathway; AMP from adenine: step 1/1. In terms of biological role, catalyzes a salvage reaction resulting in the formation of AMP, that is energically less costly than de novo synthesis. The polypeptide is Adenine phosphoribosyltransferase (Synechococcus sp. (strain CC9311)).